The following is a 336-amino-acid chain: tRNA N6-adenosine threonylcarbamoyltransferase (336 aa).

Positions 114 and 118 each coordinate Fe cation. Residues 136–140 (LVSGG), Asp-169, Gly-182, Asp-186, and Asn-275 each bind substrate. Fe cation is bound at residue Asp-301.

This sequence belongs to the KAE1 / TsaD family. Fe(2+) is required as a cofactor.

It localises to the cytoplasm. It catalyses the reaction L-threonylcarbamoyladenylate + adenosine(37) in tRNA = N(6)-L-threonylcarbamoyladenosine(37) in tRNA + AMP + H(+). In terms of biological role, required for the formation of a threonylcarbamoyl group on adenosine at position 37 (t(6)A37) in tRNAs that read codons beginning with adenine. Is involved in the transfer of the threonylcarbamoyl moiety of threonylcarbamoyl-AMP (TC-AMP) to the N6 group of A37, together with TsaE and TsaB. TsaD likely plays a direct catalytic role in this reaction. This chain is tRNA N6-adenosine threonylcarbamoyltransferase, found in Streptococcus pneumoniae (strain CGSP14).